The sequence spans 243 residues: tRNA (guanine-N(1)-)-methyltransferase (243 aa).

Residues glycine 108 and 127 to 132 contribute to the S-adenosyl-L-methionine site; that span reads LGDFVL.

The protein belongs to the RNA methyltransferase TrmD family. As to quaternary structure, homodimer.

The protein localises to the cytoplasm. It catalyses the reaction guanosine(37) in tRNA + S-adenosyl-L-methionine = N(1)-methylguanosine(37) in tRNA + S-adenosyl-L-homocysteine + H(+). Functionally, specifically methylates guanosine-37 in various tRNAs. The chain is tRNA (guanine-N(1)-)-methyltransferase from Streptococcus equi subsp. zooepidemicus (strain H70).